A 204-amino-acid polypeptide reads, in one-letter code: Large ribosomal subunit protein bL25 (204 aa).

This sequence belongs to the bacterial ribosomal protein bL25 family. CTC subfamily. As to quaternary structure, part of the 50S ribosomal subunit; part of the 5S rRNA/L5/L18/L25 subcomplex. Contacts the 5S rRNA. Binds to the 5S rRNA independently of L5 and L18.

In terms of biological role, this is one of the proteins that binds to the 5S RNA in the ribosome where it forms part of the central protuberance. This is Large ribosomal subunit protein bL25 from Pseudomonas paraeruginosa (strain DSM 24068 / PA7) (Pseudomonas aeruginosa (strain PA7)).